The following is a 1849-amino-acid chain: Mitogen-activated protein kinase kinase kinase mkh1 (1849 aa).

One can recognise a Protein kinase domain in the interval 1556 to 1825 (WFKGQLIGKG…TKLLAEHPFC (270 aa)). Residues 1562 to 1570 (IGKGTYGRV) and lysine 1585 contribute to the ATP site. Aspartate 1686 serves as the catalytic Proton acceptor.

It belongs to the protein kinase superfamily. STE Ser/Thr protein kinase family. MAP kinase kinase kinase subfamily.

The enzyme catalyses L-seryl-[protein] + ATP = O-phospho-L-seryl-[protein] + ADP + H(+). The catalysed reaction is L-threonyl-[protein] + ATP = O-phospho-L-threonyl-[protein] + ADP + H(+). Its function is as follows. Mitogen-activated protein kinase kinase kinase, part of the mkh1-mkk1-spm1 MAPK cascade that regulates vegetative growth, conidial formation, colony surface hydrophobicity, osmotic stress, cell wall integrity maintenance, carbon and nitrogen source utilization, chitin distribution, septa formation, and pathogenicity. The sequence is that of Mitogen-activated protein kinase kinase kinase mkh1 from Cytospora mali (Apple Valsa canker fungus).